The chain runs to 297 residues: Mitochondrial nicotinamide adenine dinucleotide transporter SLC25A52 (297 aa).

3 Solcar repeats span residues 28-108, 116-200, and 209-296; these read VGEM…LSCL, PEFA…IKEH, and AHLV…LLKF. The next 6 helical transmembrane spans lie at 34 to 51, 85 to 105, 118 to 138, 179 to 199, 215 to 235, and 268 to 289; these read YLCG…TYPI, LPPL…YEDL, FATH…FTPL, ILFR…PIKE, FIGG…INVV, and LFRG…INAT.

It belongs to the mitochondrial carrier (TC 2.A.29) family.

Its subcellular location is the mitochondrion inner membrane. The catalysed reaction is NAD(+)(in) = NAD(+)(out). Mitochondrial membrane carrier protein that mediates the import of NAD(+) into mitochondria. Compared to SLC25A51, SLC25A52-mediated transport is not essential for the import of NAD(+) in mitochondria. The transport mechanism, uniport or antiport, its electrogenicity and substrate selectivity, remain to be elucidated. The sequence is that of Mitochondrial nicotinamide adenine dinucleotide transporter SLC25A52 from Homo sapiens (Human).